A 439-amino-acid chain; its full sequence is Ribosomal protein uS12 methylthiotransferase RimO (439 aa).

The 113-residue stretch at 7–119 folds into the MTTase N-terminal domain; it reads KQLCLISLGC…IDIMIAKKQN (113 aa). The [4Fe-4S] cluster site is built by C16, C50, C82, C151, C155, and C158. A Radical SAM core domain is found at 137-368; that stretch reads TGSSVHAYVK…ALKHQNHSFK (232 aa).

This sequence belongs to the methylthiotransferase family. RimO subfamily. It depends on [4Fe-4S] cluster as a cofactor.

It localises to the cytoplasm. The enzyme catalyses L-aspartate(89)-[ribosomal protein uS12]-hydrogen + (sulfur carrier)-SH + AH2 + 2 S-adenosyl-L-methionine = 3-methylsulfanyl-L-aspartate(89)-[ribosomal protein uS12]-hydrogen + (sulfur carrier)-H + 5'-deoxyadenosine + L-methionine + A + S-adenosyl-L-homocysteine + 2 H(+). In terms of biological role, catalyzes the methylthiolation of an aspartic acid residue of ribosomal protein uS12. The polypeptide is Ribosomal protein uS12 methylthiotransferase RimO (Helicobacter pylori (strain G27)).